We begin with the raw amino-acid sequence, 335 residues long: Fructose-1,6-bisphosphatase class 1 (335 aa).

Positions 92, 114, 116, and 117 each coordinate Mg(2+). Residues Asp-117 to Ser-120, Asn-209, and Lys-275 each bind substrate. Residue Glu-281 coordinates Mg(2+).

Belongs to the FBPase class 1 family. Homotetramer. Mg(2+) serves as cofactor.

Its subcellular location is the cytoplasm. The enzyme catalyses beta-D-fructose 1,6-bisphosphate + H2O = beta-D-fructose 6-phosphate + phosphate. It functions in the pathway carbohydrate biosynthesis; gluconeogenesis. This is Fructose-1,6-bisphosphatase class 1 from Paracidovorax citrulli (strain AAC00-1) (Acidovorax citrulli).